The following is a 302-amino-acid chain: Nitric oxide synthase-interacting protein (302 aa).

S36 is modified (phosphoserine). The tract at residues 55 to 75 (DPVVTPDGYLYEREAILEYIL) is U-box-like. Residues 78 to 101 (KKEIARQMKAYEKQRGARREEQKE) carry the Nuclear localization signal motif. A disordered region spans residues 126–156 (LNPFTPKAASAGNGPDDAQPGSSAGPAGKDK).

This sequence belongs to the NOSIP family. As to quaternary structure, interacts with NOS1 and NOS3. Interacts with PP2A holoenzyme, containing PPP2CA, PPP2CB, PPP2R1A and PPP2R2A subunits.

The protein localises to the cytoplasm. Its subcellular location is the nucleus. It carries out the reaction S-ubiquitinyl-[E2 ubiquitin-conjugating enzyme]-L-cysteine + [acceptor protein]-L-lysine = [E2 ubiquitin-conjugating enzyme]-L-cysteine + N(6)-ubiquitinyl-[acceptor protein]-L-lysine.. E3 ubiquitin-protein ligase that is essential for proper development of the forebrain, the eye, and the face. Catalyzes monoubiquitination of serine/threonine-protein phosphatase 2A (PP2A) catalytic subunit PPP2CA/PPP2CB. Negatively regulates nitric oxide production by inducing NOS1 and NOS3 translocation to actin cytoskeleton and inhibiting their enzymatic activity. The chain is Nitric oxide synthase-interacting protein (NOSIP) from Bos taurus (Bovine).